The sequence spans 540 residues: Zinc transporter ZIP5 (540 aa).

A signal peptide spans 1–20 (MMGSPVSHLLAGFCVWVVLG). Residues 21–212 (WVGGSVPNLG…PAPPGDLLSA (192 aa)) lie on the Extracellular side of the membrane. N-linked (GlcNAc...) asparagine glycosylation occurs at asparagine 50. The disordered stretch occupies residues 78-101 (HGPLTGRAASPAADNSTHRPQNPE). Over residues 90-101 (ADNSTHRPQNPE) the composition is skewed to polar residues. A glycan (N-linked (GlcNAc...) asparagine) is linked at asparagine 160. A helical transmembrane segment spans residues 213–233 (LLQSALAVLLLSLPSPLSLLL). Residues 234-244 (LRLLGPRLLRP) lie on the Cytoplasmic side of the membrane. Residues 245–265 (LLGFLGALAVGTLCGDALLHL) form a helical membrane-spanning segment. Residues 266-287 (LPHAQEGRHAGPGGLPEKDLGP) lie on the Extracellular side of the membrane. A helical transmembrane segment spans residues 288–308 (GLSVLGGLFLLFVLENMLGLL). The Cytoplasmic portion of the chain corresponds to 309–444 (RHRGLRPRCC…LLQSGLSFRR (136 aa)). Residues 324–377 (NLETRNLDPENGSGMALQPLQAAPEPGAQGQREKNSQHPPALAPPGHQGHSHGH) form a disordered region. Serine 336 bears the Phosphoserine mark. Histidine 375 carries the pros-methylhistidine modification. Residues 445-465 (LLLLSLVSGALGLGGAVLGVG) form a helical membrane-spanning segment. The Extracellular portion of the chain corresponds to 466 to 470 (LSLGP). A helical transmembrane segment spans residues 471–491 (VPLTPWVFGVTAGVFLYVALV). Topologically, residues 492 to 508 (DMLPALLRPPEPLPTPH) are cytoplasmic. A helical transmembrane segment spans residues 509 to 529 (VLLQGLGLLLGGGLMLAITLL). Residues 530 to 540 (EERLLPVTTEG) are Extracellular-facing.

The protein belongs to the ZIP transporter (TC 2.A.5) family. Homodimer. Post-translationally, methylated at His-375 by METTL9. In terms of processing, N-Glycosylated. As to expression, expressed in liver, kidney, pancreas, small intestine, colon, spleen, fetal liver and fetal kidney.

It localises to the basolateral cell membrane. The catalysed reaction is Zn(2+)(in) = Zn(2+)(out). In terms of biological role, uniporter that transports zinc(2+) into polarized cells of enterocytes, pancreatic acinar and endoderm cells across the basolateral membrane and participates, notably, in zinc excretion from the intestine by the uptake of zinc from the blood into the intestine. The transport mechanism is temperature- and concentration-dependent and saturable. In addition, is also a high affinity copper transporter in vitro. Also may regulate glucose-stimulated insulin secretion (GSIS) in islets primarily through the zinc-activated SIRT1-PPARGC1A axis. Could regulate the BMP/TGF-beta (bone morphogenetic protein/transforming growth factor-beta) signaling pathway and modulates extracellular matrix (ECM) proteins of the sclera. Plays a role in eye development. This Homo sapiens (Human) protein is Zinc transporter ZIP5.